A 535-amino-acid chain; its full sequence is Berberine bridge enzyme-like 3 (535 aa).

The first 19 residues, 1–19 (MKEALFGLYLVLLVSGLEA), serve as a signal peptide directing secretion. Residues Cys32 and Cys95 are joined by a disulfide bond. The N-linked (GlcNAc...) asparagine glycan is linked to Asn52. The region spanning 73 to 247 (NNKNLLAIVV…LSWKINLVEV (175 aa)) is the FAD-binding PCMH-type domain. Positions 110–172 (HDNEGLSYVS…QTLAFPAGIC (63 aa)) form a cross-link, 6-(S-cysteinyl)-8alpha-(pros-histidyl)-FAD (His-Cys). 8 N-linked (GlcNAc...) asparagine glycosylation sites follow: Asn214, Asn257, Asn292, Asn321, Asn341, Asn415, Asn439, and Asn444.

This sequence belongs to the oxygen-dependent FAD-linked oxidoreductase family. The cofactor is FAD. The FAD cofactor is bound via a bicovalent 6-S-cysteinyl, 8alpha-N1-histidyl FAD linkage.

It is found in the endoplasmic reticulum. The protein resides in the cell membrane. It localises to the secreted. The protein localises to the cell wall. In terms of biological role, flavin-dependent oxidoreductase involved in the biosynthetic pathway to 4-hydroxyindole-3-carbonyl nitrile (4-OH-ICN), a cyanogenic metabolite required for inducible pathogen defense. Converts indole cyanohydrin into indole-3-carbonyl nitrile (ICN). The sequence is that of Berberine bridge enzyme-like 3 from Arabidopsis thaliana (Mouse-ear cress).